A 332-amino-acid chain; its full sequence is tRNA N6-adenosine threonylcarbamoyltransferase (332 aa).

Fe cation-binding residues include histidine 108 and histidine 112. Residues 129 to 133, aspartate 161, glutamate 178, and serine 258 each bind substrate; that span reads LISGG. A Fe cation-binding site is contributed by aspartate 286.

Belongs to the KAE1 / TsaD family. Fe(2+) serves as cofactor.

The protein localises to the cytoplasm. It carries out the reaction L-threonylcarbamoyladenylate + adenosine(37) in tRNA = N(6)-L-threonylcarbamoyladenosine(37) in tRNA + AMP + H(+). Required for the formation of a threonylcarbamoyl group on adenosine at position 37 (t(6)A37) in tRNAs that read codons beginning with adenine. Is probably involved in the transfer of the threonylcarbamoyl moiety of threonylcarbamoyl-AMP (TC-AMP) to the N6 group of A37. This chain is tRNA N6-adenosine threonylcarbamoyltransferase, found in Pyrobaculum arsenaticum (strain DSM 13514 / JCM 11321 / PZ6).